Reading from the N-terminus, the 257-residue chain is MTPSEFRQSVRRGAFRGPTAGHCGPFAQANLAILPDAYAHDFLRFCQANPKACPLLGVGEPGAFRIDALGDDLDIRTDVPSYNVYRDGRLTERVESLDALWRDDFVVFAIGCSFSFEDMLAREGIGLRHVEEGRNVPMYRTSIANRRAGIFGGQLVVSMRPLRGADAIRAVQITSRFPGVHGAPIHIGDPRELGIEDLNAPEFGDAVTIRDGELPVFWACGVTPQTALMDAKLPIAIAHTPGYMLMTDITNASLAVF.

The protein belongs to the D-glutamate cyclase family.

This is Putative hydro-lyase Bcenmc03_3969 from Burkholderia orbicola (strain MC0-3).